The primary structure comprises 604 residues: Structure-specific endonuclease subunit MUS81 (604 aa).

3 disordered regions span residues Ala93 to Val138, Lys227 to Val248, and Leu253 to Val272. Composition is skewed to basic and acidic residues over residues Glu116–Glu128 and Lys227–Val240. Residues Val138–Glu254 form a winged helix domain (WHD); critical for endonuclease activity region. Positions Leu253 to Lys262 are enriched in acidic residues. An ERCC4 domain is found at Val314–Gly423. Active-site residues include Asp318, Glu321, and Asp353. Residues Asp318, Glu321, Asp353, Glu384, and Arg385 each coordinate Mg(2+). The tract at residues Val524 to Cys598 is helix-hairpin-helix (2HhH); involved in DNA recognition and bending.

It belongs to the XPF family. As to quaternary structure, part of the heterodimeric DNA structure-specific endonuclease complex MUS81-EME1. Part of the heterodimeric DNA structure-specific endonuclease complex MUS81-EME2. Requires Mg(2+) as cofactor.

The protein localises to the nucleus. Its subcellular location is the nucleolus. Functionally, catalytic subunit of two functionally distinct, structure-specific, heterodimeric DNA endonucleases MUS81-EME1 and MUS81-EME2 that are involved in the maintenance of genome stability. Both endonucleases have essentially the same substrate specificity though MUS81-EME2 is more active than its MUS81-EME1 counterpart. Both cleave 3'-flaps and nicked Holliday junctions, and exhibit limited endonuclease activity with 5' flaps and nicked double-stranded DNAs. MUS81-EME2 which is active during the replication of DNA is more specifically involved in replication fork processing. Replication forks frequently encounter obstacles to their passage, including DNA base lesions, DNA interstrand cross-links, difficult-to-replicate sequences, transcription bubbles, or tightly bound proteins. One mechanism for the restart of a stalled replication fork involves nucleolytic cleavage mediated by the MUS81-EME2 endonuclease. By acting upon the stalled fork, MUS81-EME2 generates a DNA double-strand break (DSB) that can be repaired by homologous recombination, leading to the restoration of an active fork. MUS81-EME2 could also function in telomere maintenance. MUS81-EME1, on the other hand, is active later in the cell cycle and functions in the resolution of mitotic recombination intermediates including the Holliday junctions, the four-way DNA intermediates that form during homologous recombination. The sequence is that of Structure-specific endonuclease subunit MUS81 (mus81) from Danio rerio (Zebrafish).